The sequence spans 627 residues: Membrane protein insertase YidC (627 aa).

The chain crosses the membrane as a helical span at residues L8–P28. Polar residues predominate over residues K33 to G57. The tract at residues K33–V68 is disordered. Basic and acidic residues predominate over residues K58 to V68. Helical transmembrane passes span F417–F437, V488–F508, A536–G556, and M575–V595.

The protein belongs to the OXA1/ALB3/YidC family. Type 1 subfamily. As to quaternary structure, interacts with the Sec translocase complex via SecD. Specifically interacts with transmembrane segments of nascent integral membrane proteins during membrane integration.

Its subcellular location is the cell inner membrane. Its function is as follows. Required for the insertion and/or proper folding and/or complex formation of integral membrane proteins into the membrane. Involved in integration of membrane proteins that insert both dependently and independently of the Sec translocase complex, as well as at least some lipoproteins. Aids folding of multispanning membrane proteins. The sequence is that of Membrane protein insertase YidC from Leptospira interrogans serogroup Icterohaemorrhagiae serovar copenhageni (strain Fiocruz L1-130).